We begin with the raw amino-acid sequence, 192 residues long: Thymidine kinase (192 aa).

Residues 9 to 16 (STMNAGKS) and 87 to 90 (DEAQ) contribute to the ATP site. E88 acts as the Proton acceptor in catalysis. Zn(2+) contacts are provided by C145, C147, C182, and H185.

Belongs to the thymidine kinase family. In terms of assembly, homotetramer.

The protein resides in the cytoplasm. It carries out the reaction thymidine + ATP = dTMP + ADP + H(+). The chain is Thymidine kinase from Pasteurella multocida (strain Pm70).